The chain runs to 351 residues: AA9 family lytic polysaccharide monooxygenase A (351 aa).

Residue His1 participates in Cu(2+) binding. The cysteines at positions 52 and 178 are disulfide-linked. Asn53 carries an N-linked (GlcNAc...) asparagine glycan. His86 contacts Cu(2+). Asn138 is a glycosylation site (N-linked (GlcNAc...) asparagine). Residues His164 and Gln173 each coordinate O2. Tyr175 provides a ligand contact to Cu(2+). Residue Ser280 is the site of GPI-anchor amidated serine attachment. A propeptide spans 281 to 351 (SAIGTSTASS…RSGTLGRLSF (71 aa)) (removed in mature form).

The protein belongs to the polysaccharide monooxygenase AA9 family. Cu(2+) serves as cofactor.

It localises to the cell membrane. The catalysed reaction is [(1-&gt;4)-beta-D-glucosyl]n+m + reduced acceptor + O2 = 4-dehydro-beta-D-glucosyl-[(1-&gt;4)-beta-D-glucosyl]n-1 + [(1-&gt;4)-beta-D-glucosyl]m + acceptor + H2O.. In terms of biological role, lytic polysaccharide monooxygenase (LPMO) that depolymerizes crystalline and amorphous polysaccharides via the oxidation of scissile alpha- or beta-(1-4)-glycosidic bonds, yielding C1 or C4 oxidation products. Catalysis by LPMOs requires the reduction of the active-site copper from Cu(II) to Cu(I) by a reducing agent and H(2)O(2) or O(2) as a cosubstrate. Its function is as follows. Has broad specificity, cleaving at any position along the beta-glucan backbone of xyloglucan, regardless of substitutions. Shows minor activity on glucomannan. The sequence is that of AA9 family lytic polysaccharide monooxygenase A from Gloeophyllum trabeum (Brown rot fungus).